The chain runs to 699 residues: Pollen-specific leucine-rich repeat extensin-like protein 4 (699 aa).

The signal sequence occupies residues 1-39 (MPFYKQPWVFSKVFVLAMAKPPSFGCCFFLLFFSFLSSS). Asparagine 106 carries N-linked (GlcNAc...) asparagine glycosylation. LRR repeat units follow at residues 133–157 (VTVV…LGLM), 158–180 (TDVA…SFEK), 182–205 (KLMH…VLSW), 206–229 (PDVK…LFKK), 231–251 (LDAI…SLGE), 253–275 (PASV…IGNM), 276–299 (KNLN…IGKL), 301–323 (NVTV…FVGL), and 324–347 (TSVE…ICQL). Asparagine 301 is a glycosylation site (N-linked (GlcNAc...) asparagine). Asparagine 352 carries an N-linked (GlcNAc...) asparagine glycan. Residues 411-699 (KCAGGSSTPS…SPPPPMFAGY (289 aa)) are disordered. 4 stretches are compositionally biased toward pro residues: residues 421 to 466 (KPSP…PVPT), 482 to 504 (KPSP…PQPD), 518 to 659 (PPPA…PPAP), and 690 to 699 (SPPPPMFAGY). The tract at residues 517–699 (SPPPAPVNSP…SPPPPMFAGY (183 aa)) is contains the Ser-Pro(4) repeats.

In terms of processing, hydroxylated on proline residues in the S-P-P-P-P repeat. Post-translationally, O-glycosylated on hydroxyprolines. As to expression, expressed in flowers, stamen, pollen, and pollinated carpels.

The protein resides in the secreted. Its subcellular location is the cell wall. Its function is as follows. Modulates cell morphogenesis by regulating cell wall formation and assembly, and/or growth polarization. This Arabidopsis thaliana (Mouse-ear cress) protein is Pollen-specific leucine-rich repeat extensin-like protein 4 (PEX4).